The following is a 143-amino-acid chain: Large ribosomal subunit protein uL11 (143 aa).

The protein belongs to the universal ribosomal protein uL11 family. In terms of assembly, part of the ribosomal stalk of the 50S ribosomal subunit. Interacts with L10 and the large rRNA to form the base of the stalk. L10 forms an elongated spine to which L12 dimers bind in a sequential fashion forming a multimeric L10(L12)X complex. In terms of processing, one or more lysine residues are methylated.

Functionally, forms part of the ribosomal stalk which helps the ribosome interact with GTP-bound translation factors. The sequence is that of Large ribosomal subunit protein uL11 from Polynucleobacter necessarius subsp. necessarius (strain STIR1).